The primary structure comprises 782 residues: Endonuclease MutS2 (782 aa).

Glycine 336–threonine 343 provides a ligand contact to ATP. A Smr domain is found at leucine 707–lysine 782.

It belongs to the DNA mismatch repair MutS family. MutS2 subfamily. Homodimer. Binds to stalled ribosomes, contacting rRNA.

Functionally, endonuclease that is involved in the suppression of homologous recombination and thus may have a key role in the control of bacterial genetic diversity. Acts as a ribosome collision sensor, splitting the ribosome into its 2 subunits. Detects stalled/collided 70S ribosomes which it binds and splits by an ATP-hydrolysis driven conformational change. Acts upstream of the ribosome quality control system (RQC), a ribosome-associated complex that mediates the extraction of incompletely synthesized nascent chains from stalled ribosomes and their subsequent degradation. Probably generates substrates for RQC. This Staphylococcus carnosus (strain TM300) protein is Endonuclease MutS2.